The following is a 508-amino-acid chain: Bestrophin-2 (508 aa).

The Cytoplasmic segment spans residues 1-31 (MTVTYTARVANARFGGFSQLLLLWRGSIYKL). Ala10 serves as a coordination point for Ca(2+). The helical transmembrane segment at 32–51 (LWRELLCFLGLYMALSAAYR) threads the bilayer. The Extracellular segment spans residues 52–60 (FLLAEEQKR). The chain crosses the membrane as a helical span at residues 61–82 (YFEKLVIYCDQYASLIPVSFVL). At 83–238 (GFYVTLVVHR…WISIPLVYTQ (156 aa)) the chain is on the cytoplasmic side. Residues 239–255 (VVTIAVYSYFLACLIGR) traverse the membrane as a helical segment. Residues 256–274 (QFLDPAQGYKDHTLDLCVP) are Extracellular-facing. The chain crosses the membrane as a helical span at residues 275-288 (IFTLLQFFFYAGWL). Residues 289 to 508 (KVAEQLINPF…PIGEEEESPA (220 aa)) lie on the Cytoplasmic side of the membrane. Positions 293, 296, 301, and 304 each coordinate Ca(2+). Residues 455–508 (LREPELEPPACPEPPAPIPGPTPEPFTTVSIPGPRAPAPPWLPSPIGEEEESPA) are disordered. Composition is skewed to pro residues over residues 461–478 (EPPACPEPPAPIPGPTPE) and 488–497 (PRAPAPPWLP).

This sequence belongs to the anion channel-forming bestrophin (TC 1.A.46) family. Calcium-sensitive chloride channel subfamily. As to quaternary structure, pentamer. Interacts with GLUL; this interaction tethers a fraction of GLUL to the membrane, causing a decrease of cytosolic glutamine synthase (GS) activity and inhibits the chloride channel activity of BEST2 by affecting the gating at the aperture in the absence of intracellular glutamate. In terms of tissue distribution, expressed in mucin-secreting colonic goblet cells.

It localises to the cell membrane. The protein localises to the basolateral cell membrane. The enzyme catalyses chloride(in) = chloride(out). It carries out the reaction hydrogencarbonate(in) = hydrogencarbonate(out). The catalysed reaction is L-glutamate(out) = L-glutamate(in). It catalyses the reaction iodide(out) = iodide(in). The enzyme catalyses L-glutamine(out) = L-glutamine(in). With respect to regulation, chloride channel activity is allosterically inhibited by GLUL/glutamine synthase (GS) which affects the gating at the aperture in the absence of intracellular glutamate. Inhibitory effect of GLUL is relieved upon increasing of intracellular level of L-glutamate. Functionally, ligand-gated anion channel that allows the movement of anions across cell membranes when activated by calcium (Ca2+). Transports a large specter of anions, namely mediates the movement of chloride, L-glutamate and iodide. Calcium-binding triggers the dilation of the aperture, but calcium-dependent gating is only effective when the size of the passing anion is bigger than the closed aperture. Mediates the calcium-activated hydrogencarbonate movement and participates in colonic hydrogencarbonate secretion concomitant with mucin secretion. In non-pigmented epithelium (NPE), mediates the efflux of intracellular L-glutamate; binding of intracellular L-glutamate activates and open both the neck and the aperture of the channel, leading to L-glutamate exit promoting chloride influx movement from the extracellular side in trans. Also exhibits a directional permeability for intracellular glutamine, in a similar manner as for L-glutamate. The polypeptide is Bestrophin-2 (Mus musculus (Mouse)).